The chain runs to 71 residues: Large ribosomal subunit protein uL29 (71 aa).

The protein belongs to the universal ribosomal protein uL29 family.

In Synechococcus sp. (strain RCC307), this protein is Large ribosomal subunit protein uL29.